A 79-amino-acid polypeptide reads, in one-letter code: MKLTCMMLVAVLFLTAWTFVTANVSRNGLENLFPEERHEMMNPNAAKLNNRDCVKAGTACGFPKPEPACCSSWCIFVCT.

The N-terminal stretch at Met1–Ala22 is a signal peptide. Residues Asn23–Arg51 constitute a propeptide that is removed on maturation. Intrachain disulfides connect Cys53-Cys70, Cys60-Cys74, and Cys69-Cys78.

This sequence belongs to the conotoxin O1 superfamily. As to expression, expressed by the venom duct.

The protein resides in the secreted. This Conus leopardus (Leopard cone) protein is Conotoxin Leo-O4.